A 510-amino-acid polypeptide reads, in one-letter code: tRNA-2-methylthio-N(6)-dimethylallyladenosine synthase (510 aa).

A disordered region spans residues 1-25 (MSGFNDSPVPESAEKADGLLSQERG). An MTTase N-terminal domain is found at 34 to 154 (RKLFVKSYGC…LPDLLRRVAH (121 aa)). The [4Fe-4S] cluster site is built by C43, C79, C117, C195, C199, and C202. In terms of domain architecture, Radical SAM core spans 181–414 (AERGVGAFVT…QALLEEQRQA (234 aa)). One can recognise a TRAM domain in the interval 417 to 479 (KAMIGRVLPV…PNSFHGRLLA (63 aa)). The segment covering 484 to 493 (QESAQGQESA) has biased composition (polar residues). Residues 484 to 510 (QESAQGQESAQGMERMEQNARAWEVPV) form a disordered region.

Belongs to the methylthiotransferase family. MiaB subfamily. Monomer. [4Fe-4S] cluster is required as a cofactor.

The protein resides in the cytoplasm. The enzyme catalyses N(6)-dimethylallyladenosine(37) in tRNA + (sulfur carrier)-SH + AH2 + 2 S-adenosyl-L-methionine = 2-methylsulfanyl-N(6)-dimethylallyladenosine(37) in tRNA + (sulfur carrier)-H + 5'-deoxyadenosine + L-methionine + A + S-adenosyl-L-homocysteine + 2 H(+). In terms of biological role, catalyzes the methylthiolation of N6-(dimethylallyl)adenosine (i(6)A), leading to the formation of 2-methylthio-N6-(dimethylallyl)adenosine (ms(2)i(6)A) at position 37 in tRNAs that read codons beginning with uridine. In Beijerinckia indica subsp. indica (strain ATCC 9039 / DSM 1715 / NCIMB 8712), this protein is tRNA-2-methylthio-N(6)-dimethylallyladenosine synthase.